The sequence spans 316 residues: Methionyl-tRNA formyltransferase (316 aa).

113–116 lines the (6S)-5,6,7,8-tetrahydrofolate pocket; the sequence is SLLP.

Belongs to the Fmt family.

The enzyme catalyses L-methionyl-tRNA(fMet) + (6R)-10-formyltetrahydrofolate = N-formyl-L-methionyl-tRNA(fMet) + (6S)-5,6,7,8-tetrahydrofolate + H(+). Functionally, attaches a formyl group to the free amino group of methionyl-tRNA(fMet). The formyl group appears to play a dual role in the initiator identity of N-formylmethionyl-tRNA by promoting its recognition by IF2 and preventing the misappropriation of this tRNA by the elongation apparatus. The polypeptide is Methionyl-tRNA formyltransferase (Sodalis glossinidius (strain morsitans)).